A 296-amino-acid polypeptide reads, in one-letter code: Cyclin-dependent kinase 1 (296 aa).

A Protein kinase domain is found at 5-288 (FQKLEKIGEG…AKNGLSHKYF (284 aa)). ATP-binding positions include 11–19 (IGEGTYGVV) and lysine 34. Aspartate 130 acts as the Proton acceptor in catalysis.

It belongs to the protein kinase superfamily. CMGC Ser/Thr protein kinase family. CDC2/CDKX subfamily.

The protein localises to the nucleus. It carries out the reaction L-seryl-[protein] + ATP = O-phospho-L-seryl-[protein] + ADP + H(+). The catalysed reaction is L-threonyl-[protein] + ATP = O-phospho-L-threonyl-[protein] + ADP + H(+). In terms of biological role, cyclin-dependent kinase that acts as a master regulator of the mitotic and meiotic cell cycles. The protein is Cyclin-dependent kinase 1 of Encephalitozoon cuniculi (strain GB-M1) (Microsporidian parasite).